The following is an 848-amino-acid chain: Coiled-coil and C2 domain-containing protein 1B (848 aa).

Over residues 1 to 10 the composition is skewed to basic residues; that stretch reads MPGPRPRKGP. Disordered regions lie at residues 1-21 and 53-75; these read MPGP…ETAK and ALTG…PLPM. A coiled-coil region spans residues 165 to 193; sequence LQALLEERIRNYREAAASAKEAGEAAKAR. 4 disordered regions span residues 217-276, 326-353, 433-460, and 476-523; these read EDEI…DPDP, VDLS…ATQG, DFAE…QDSV, and ALVD…SPSV. The segment covering 438 to 448 has biased composition (pro residues); that stretch reads PVPPGFPPIPG. Serine 455 is modified (phosphoserine). The span at 476-485 shows a compositional bias: acidic residues; it reads ALVDDDEESD. Low complexity-rich tracts occupy residues 487-498 and 509-522; these read PAQAPLAKKPAQ and EPKA…LSPS. Phosphoserine is present on serine 583. Phosphothreonine is present on threonine 586. A coiled-coil region spans residues 600 to 626; it reads LRLSQKAEEVYAQLQKMLQEQQAKCLL. The region spanning 666–805 is the C2 domain; the sequence is DPPSHHFELK…EKECEIREIM (140 aa).

It belongs to the CC2D1 family. As to quaternary structure, interacts with CHMP4B.

The protein resides in the nucleus. Transcription factor that binds specifically to the DRE (dual repressor element) and represses HTR1A gene transcription in neuronal cells. This Mus musculus (Mouse) protein is Coiled-coil and C2 domain-containing protein 1B (Cc2d1b).